Reading from the N-terminus, the 737-residue chain is Amino-acid acetyltransferase, mitochondrial (737 aa).

The transit peptide at 1-47 (MSRSTVLGWCTQSCRLLQKHDHSFSFPTFNGSPPLKKRRFCDSAAPA) directs the protein to the mitochondrion. The disordered stretch occupies residues 43-78 (SAAPAAPRPSIHRPSEYIPHSKSGGEAPQDLGHKAR). The N-acetyltransferase domain occupies 558 to 727 (GEPALTLDDP…YEGVCRAIEP (170 aa)).

The protein belongs to the acetyltransferase family.

The protein localises to the mitochondrion. The enzyme catalyses L-glutamate + acetyl-CoA = N-acetyl-L-glutamate + CoA + H(+). It participates in amino-acid biosynthesis; L-arginine biosynthesis; N(2)-acetyl-L-ornithine from L-glutamate: step 1/4. Functionally, N-acetylglutamate synthase involved in arginine biosynthesis. The polypeptide is Amino-acid acetyltransferase, mitochondrial (ARG2) (Coccidioides immitis (strain RS) (Valley fever fungus)).